Here is a 524-residue protein sequence, read N- to C-terminus: Probable serine/threonine-protein kinase WNK10 (524 aa).

Residues isoleucine 16–leucine 273 form the Protein kinase domain. Residues threonine 96–phenylalanine 99 and lysine 146 each bind ATP. Catalysis depends on aspartate 163, which acts as the Proton acceptor. Residue serine 477 is modified to Phosphoserine. Residues serine 480–leucine 523 adopt a coiled-coil conformation.

Belongs to the protein kinase superfamily. Ser/Thr protein kinase family. WNK subfamily.

The enzyme catalyses L-seryl-[protein] + ATP = O-phospho-L-seryl-[protein] + ADP + H(+). It carries out the reaction L-threonyl-[protein] + ATP = O-phospho-L-threonyl-[protein] + ADP + H(+). May regulate flowering time by modulating the photoperiod pathway. The chain is Probable serine/threonine-protein kinase WNK10 (WNK10) from Arabidopsis thaliana (Mouse-ear cress).